The sequence spans 918 residues: Protein translocase subunit SecA (918 aa).

Residues Q87, 105–109 (GEGKT), and D494 each bind ATP. Residues 863 to 883 (KQDDTSPKEYKKIGQEQRAEV) are compositionally biased toward basic and acidic residues. The disordered stretch occupies residues 863–918 (KQDDTSPKEYKKIGQEQRAEVDMFGNELKSNKTKPQVSSTTSSGGGSERRSSRRKK).

The protein belongs to the SecA family. In terms of assembly, monomer and homodimer. Part of the essential Sec protein translocation apparatus which comprises SecA, SecYEG and auxiliary proteins SecDF. Other proteins may also be involved.

It is found in the cell inner membrane. The protein resides in the cytoplasm. The catalysed reaction is ATP + H2O + cellular proteinSide 1 = ADP + phosphate + cellular proteinSide 2.. Part of the Sec protein translocase complex. Interacts with the SecYEG preprotein conducting channel. Has a central role in coupling the hydrolysis of ATP to the transfer of proteins into and across the cell membrane, serving as an ATP-driven molecular motor driving the stepwise translocation of polypeptide chains across the membrane. The polypeptide is Protein translocase subunit SecA (Leptospira biflexa serovar Patoc (strain Patoc 1 / Ames)).